The primary structure comprises 226 residues: Hand transcription factor 1 (226 aa).

A compositionally biased stretch (polar residues) spans 1–15; it reads MVKSTTAGNNAVSSL. A disordered region spans residues 1–35; the sequence is MVKSTTAGNNAVSSLESTDSKKSRKEKSREKEHRR. The segment at 23-36 is basic motif; it reads SRKEKSREKEHRRA. A bHLH domain is found at 23 to 77; sequence SRKEKSREKEHRRAQCINSAFEILQQHIPYLKSEERKSLPKIKTLRLAMQYIDHL. Residues 37-77 form a helix-loop-helix motif region; that stretch reads QCINSAFEILQQHIPYLKSEERKSLPKIKTLRLAMQYIDHL.

It is found in the nucleus. Its function is as follows. Probable transcription factor which regulates early embryonic myogenesis, in cooperation with transcription factors unc-120 and hlh-1. Involved in controlling the number and position of somatic gonadal precursor cells (SGPs) in the gonadal primordium, and embryonic body shape. The chain is Hand transcription factor 1 from Caenorhabditis elegans.